The primary structure comprises 272 residues: ATP-dependent Clp protease proteolytic subunit, mitochondrial (272 aa).

The transit peptide at 1-52 (MWPRVLLGEARVAVDGCRALLSRLAVHFSPPWTAVSCSPLRRSLHGTATRAF) directs the protein to the mitochondrion. The Nucleophile role is filled by serine 149. Histidine 174 is an active-site residue. Lysine 196 carries the N6-succinyllysine modification. At lysine 207 the chain carries N6-acetyllysine. The segment at 240 to 272 (VLVHPPQDGEDEPELVQKETATAPTDPPAPTST) is disordered.

Belongs to the peptidase S14 family. In terms of assembly, fourteen CLPP subunits assemble into 2 heptameric rings which stack back to back to give a disk-like structure with a central cavity. Component of the ClpXP complex formed by the assembly of two CLPP heptameric rings with two CLPX hexameric rings, giving rise to a symmetrical structure with two central CLPP rings flanked by a CLPX ring at either end of the complex. As to expression, detected in liver (at protein level). High levels found in heart, liver and skeletal muscle.

Its subcellular location is the mitochondrion matrix. The enzyme catalyses Hydrolysis of proteins to small peptides in the presence of ATP and magnesium. alpha-casein is the usual test substrate. In the absence of ATP, only oligopeptides shorter than five residues are hydrolyzed (such as succinyl-Leu-Tyr-|-NHMec, and Leu-Tyr-Leu-|-Tyr-Trp, in which cleavage of the -Tyr-|-Leu- and -Tyr-|-Trp bonds also occurs).. Protease component of the ClpXP complex that cleaves peptides and various proteins in an ATP-dependent process. Has low peptidase activity in the absence of CLPX. The ClpXP complex can degrade CSN1S1, CSN2 and CSN3, as well as synthetic peptides (in vitro) and may be responsible for a fairly general and central housekeeping function rather than for the degradation of specific substrates. Cleaves PINK1 in the mitochondrion. This Mus musculus (Mouse) protein is ATP-dependent Clp protease proteolytic subunit, mitochondrial.